We begin with the raw amino-acid sequence, 304 residues long: Protoheme IX farnesyltransferase (304 aa).

A run of 9 helical transmembrane segments spans residues 32–52, 54–74, 104–124, 126–146, 154–174, 180–200, 226–246, 247–267, and 284–304; these read VVAL…PGSV, LQPL…AAAF, ALTF…TLVN, LTAW…TAYL, IVVG…SVTG, ALLL…ALAI, CILL…LVGM, CGPV…YKAW, and FSIY…YLWV.

It belongs to the UbiA prenyltransferase family. Protoheme IX farnesyltransferase subfamily.

The protein resides in the cell inner membrane. The enzyme catalyses heme b + (2E,6E)-farnesyl diphosphate + H2O = Fe(II)-heme o + diphosphate. It participates in porphyrin-containing compound metabolism; heme O biosynthesis; heme O from protoheme: step 1/1. Functionally, converts heme B (protoheme IX) to heme O by substitution of the vinyl group on carbon 2 of heme B porphyrin ring with a hydroxyethyl farnesyl side group. This is Protoheme IX farnesyltransferase from Shewanella sediminis (strain HAW-EB3).